Consider the following 265-residue polypeptide: Pancreas transcription factor 1 subunit alpha (265 aa).

Residues glutamine 115–leucine 167 enclose the bHLH domain.

The protein localises to the nucleus. Functionally, transcription factor implicated in the cell fate determination in various organs. Binds to the E-box consensus sequence 5'-CANNTG-3'. Required for exocrine pancreatic development. Plays a central role in directing the differentiation of retinal progenitors towards horizontal and amacrine fates. This is Pancreas transcription factor 1 subunit alpha (ptf1a) from Danio rerio (Zebrafish).